The sequence spans 203 residues: MSGSLFIVAAPSGAGKTSLVKALAASMADIRLSISHTTRPPRPGEQDGMDYHFVTEAIFETMEGGGGFLEHAQVFGHRYGTAKESVLPLLAQGMDVILEIDWQGRRQVQAQFPHCVSIFILPPSRETLEHRLRLRGQDTEAVVARRMGDACAEISHYNEFDYLVVNDDFEVAHTDLRAIVQSRRLLRLRQEKRLKSLLGELLE.

A Guanylate kinase-like domain is found at 3-181; that stretch reads GSLFIVAAPS…AHTDLRAIVQ (179 aa). Residue 10–17 coordinates ATP; the sequence is APSGAGKT.

It belongs to the guanylate kinase family.

It localises to the cytoplasm. The catalysed reaction is GMP + ATP = GDP + ADP. Its function is as follows. Essential for recycling GMP and indirectly, cGMP. The polypeptide is Guanylate kinase (Nitrosococcus oceani (strain ATCC 19707 / BCRC 17464 / JCM 30415 / NCIMB 11848 / C-107)).